We begin with the raw amino-acid sequence, 180 residues long: Cell division protein ZapC (180 aa).

Belongs to the ZapC family. As to quaternary structure, interacts directly with FtsZ.

The protein resides in the cytoplasm. Its function is as follows. Contributes to the efficiency of the cell division process by stabilizing the polymeric form of the cell division protein FtsZ. Acts by promoting interactions between FtsZ protofilaments and suppressing the GTPase activity of FtsZ. The sequence is that of Cell division protein ZapC from Vibrio cholerae serotype O1 (strain ATCC 39315 / El Tor Inaba N16961).